Here is a 673-residue protein sequence, read N- to C-terminus: Protein-arginine deiminase type-2 (673 aa).

At Met1 the chain carries N-acetylmethionine. Ca(2+)-binding residues include Asp131, Asp133, Asp135, Glu139, Asn162, Asp164, Asp166, Asp174, Asp177, Lys179, Asp185, and Asp188. Arg352 bears the Citrulline mark. Ca(2+) contacts are provided by Glu362, Asp397, Phe416, Leu419, and Glu420. The active-site Nucleophile is the Cys655.

The protein belongs to the protein arginine deiminase family. Homodimer. Ca(2+) serves as cofactor. As to expression, expressed in various tissues including muscle, uterus, spinal cord, salivary gland and pancreas.

The protein resides in the cytoplasm. The catalysed reaction is L-arginyl-[protein] + H2O = L-citrullyl-[protein] + NH4(+). Its function is as follows. Catalyzes the deimination of arginine residues of proteins. The protein is Protein-arginine deiminase type-2 (Padi2) of Mus musculus (Mouse).